Reading from the N-terminus, the 238-residue chain is RNA-free ribonuclease P (238 aa).

Belongs to the HARP family.

It catalyses the reaction Endonucleolytic cleavage of RNA, removing 5'-extranucleotides from tRNA precursor.. RNA-free RNase P that catalyzes the removal of the 5'-leader sequence from pre-tRNA to produce the mature 5'-terminus. This chain is RNA-free ribonuclease P, found in Hyperthermus butylicus (strain DSM 5456 / JCM 9403 / PLM1-5).